The sequence spans 109 residues: Nucleoid-associated protein NT01EI_1109 (109 aa).

Residues 89 to 109 (KERMASVSSGMQLPPGFKMPF) form a disordered region.

It belongs to the YbaB/EbfC family. Homodimer.

It localises to the cytoplasm. Its subcellular location is the nucleoid. In terms of biological role, binds to DNA and alters its conformation. May be involved in regulation of gene expression, nucleoid organization and DNA protection. This Edwardsiella ictaluri (strain 93-146) protein is Nucleoid-associated protein NT01EI_1109.